The chain runs to 312 residues: Ribosomal protein uL3 glutamine methyltransferase (312 aa).

This sequence belongs to the protein N5-glutamine methyltransferase family. PrmB subfamily.

It carries out the reaction L-glutaminyl-[ribosomal protein uL3] + S-adenosyl-L-methionine = N(5)-methyl-L-glutaminyl-[ribosomal protein uL3] + S-adenosyl-L-homocysteine + H(+). Its function is as follows. Methylates large ribosomal subunit protein uL3 on a specific glutamine residue. The protein is Ribosomal protein uL3 glutamine methyltransferase of Xylella fastidiosa (strain 9a5c).